A 273-amino-acid polypeptide reads, in one-letter code: Large ribosomal subunit protein uL2 (273 aa).

Residues 228-273 (VDHPHGGGEGKTSGGRHPVTPWGFPTKGKKTRKNKRTSKFIVKKRK) form a disordered region. The span at 254 to 273 (KGKKTRKNKRTSKFIVKKRK) shows a compositional bias: basic residues.

The protein belongs to the universal ribosomal protein uL2 family. Part of the 50S ribosomal subunit. Forms a bridge to the 30S subunit in the 70S ribosome.

Functionally, one of the primary rRNA binding proteins. Required for association of the 30S and 50S subunits to form the 70S ribosome, for tRNA binding and peptide bond formation. It has been suggested to have peptidyltransferase activity; this is somewhat controversial. Makes several contacts with the 16S rRNA in the 70S ribosome. The protein is Large ribosomal subunit protein uL2 of Rickettsia rickettsii (strain Iowa).